Consider the following 130-residue polypeptide: Small ribosomal subunit protein uS9 (130 aa).

It belongs to the universal ribosomal protein uS9 family.

In Hahella chejuensis (strain KCTC 2396), this protein is Small ribosomal subunit protein uS9.